Here is a 216-residue protein sequence, read N- to C-terminus: V-type ATP synthase subunit D (216 aa).

This sequence belongs to the V-ATPase D subunit family.

Its function is as follows. Produces ATP from ADP in the presence of a proton gradient across the membrane. This is V-type ATP synthase subunit D from Clostridium botulinum (strain ATCC 19397 / Type A).